A 116-amino-acid chain; its full sequence is Holo-[acyl-carrier-protein] synthase (116 aa).

Mg(2+) is bound by residues Asp5 and Glu50.

It belongs to the P-Pant transferase superfamily. AcpS family. Requires Mg(2+) as cofactor.

The protein localises to the cytoplasm. The enzyme catalyses apo-[ACP] + CoA = holo-[ACP] + adenosine 3',5'-bisphosphate + H(+). In terms of biological role, transfers the 4'-phosphopantetheine moiety from coenzyme A to a Ser of acyl-carrier-protein. In Nitratiruptor sp. (strain SB155-2), this protein is Holo-[acyl-carrier-protein] synthase.